A 492-amino-acid chain; its full sequence is Steroid 21-hydroxylase (492 aa).

Positions 91 and 120 each coordinate heme b. Residue Arg231 participates in 17alpha-hydroxyprogesterone binding. Arg231 contacts progesterone. Residues His363, Arg424, and Cys426 each contribute to the heme b site.

The protein belongs to the cytochrome P450 family. Heme b serves as cofactor.

The protein resides in the endoplasmic reticulum membrane. It is found in the microsome membrane. It carries out the reaction 17alpha-hydroxyprogesterone + reduced [NADPH--hemoprotein reductase] + O2 = 11-deoxycortisol + oxidized [NADPH--hemoprotein reductase] + H2O + H(+). The catalysed reaction is progesterone + reduced [NADPH--hemoprotein reductase] + O2 = 21-hydroxyprogesterone + oxidized [NADPH--hemoprotein reductase] + H2O + H(+). In terms of biological role, specifically catalyzes the 21-hydroxylation of steroids. Required for the adrenal synthesis of mineralocorticoids and glucocorticoids. The polypeptide is Steroid 21-hydroxylase (CYP21) (Felis catus (Cat)).